Reading from the N-terminus, the 370-residue chain is Phosphoserine aminotransferase (370 aa).

N-acetylmethionine is present on Met1. Positions 44 and 45 each coordinate O-phospho-L-serine. The residue at position 51 (Lys51) is an N6-acetyllysine. Residues Gly79, Cys80, and Trp107 each coordinate pyridoxal 5'-phosphate. At Lys127 the chain carries N6-acetyllysine. Thr156, Asp176, and Gln199 together coordinate pyridoxal 5'-phosphate. Position 200 is an N6-(pyridoxal phosphate)lysine (Lys200). 2 residues coordinate pyridoxal 5'-phosphate: Asn241 and Thr242. N6-acetyllysine occurs at positions 269, 318, and 323. Residue Ser331 is modified to Phosphoserine. Lys333 carries the N6-acetyllysine modification. O-phospho-L-serine is bound by residues His335, Arg336, and Arg342.

This sequence belongs to the class-V pyridoxal-phosphate-dependent aminotransferase family. SerC subfamily. In terms of assembly, homodimer. Requires pyridoxal 5'-phosphate as cofactor. In terms of tissue distribution, expressed at high levels in the brain, liver, kidney and pancreas, and very weakly expressed in the thymus, prostate, testis and colon.

The enzyme catalyses O-phospho-L-serine + 2-oxoglutarate = 3-phosphooxypyruvate + L-glutamate. Its pathway is amino-acid biosynthesis; L-serine biosynthesis; L-serine from 3-phospho-D-glycerate: step 2/3. Phosphoserine transaminase activity is strongly stimulated by increasing the ionic strength. Its function is as follows. Involved in L-serine biosynthesis via the phosphorylated pathway, a three-step pathway converting the glycolytic intermediate 3-phospho-D-glycerate into L-serine. Catalyzes the second step, that is the pyridoxal 5'-phosphate-dependent transamination of 3-phosphohydroxypyruvate and L-glutamate to O-phosphoserine (OPS) and alpha-ketoglutarate. The protein is Phosphoserine aminotransferase of Homo sapiens (Human).